We begin with the raw amino-acid sequence, 284 residues long: uncharacterized protein (284 aa).

Residues 4 to 133 enclose the Photolyase/cryptochrome alpha/beta domain; the sequence is PLHLFWHRRD…AVHRQWDQLL (130 aa).

This is an uncharacterized protein from Synechococcus sp. (strain PCC 6716).